Consider the following 427-residue polypeptide: Phosphomethylpyrimidine synthase (427 aa).

Substrate contacts are provided by residues Asn-66, Met-95, Tyr-124, His-163, 185–187 (SRG), 226–229 (DGLR), and Glu-265. Position 269 (His-269) interacts with Zn(2+). Tyr-292 lines the substrate pocket. His-333 serves as a coordination point for Zn(2+). The [4Fe-4S] cluster site is built by Cys-409, Cys-412, and Cys-416.

The protein belongs to the ThiC family. In terms of assembly, homodimer. It depends on [4Fe-4S] cluster as a cofactor.

It carries out the reaction 5-amino-1-(5-phospho-beta-D-ribosyl)imidazole + S-adenosyl-L-methionine = 4-amino-2-methyl-5-(phosphooxymethyl)pyrimidine + CO + 5'-deoxyadenosine + formate + L-methionine + 3 H(+). It functions in the pathway cofactor biosynthesis; thiamine diphosphate biosynthesis. Its function is as follows. Catalyzes the synthesis of the hydroxymethylpyrimidine phosphate (HMP-P) moiety of thiamine from aminoimidazole ribotide (AIR) in a radical S-adenosyl-L-methionine (SAM)-dependent reaction. The chain is Phosphomethylpyrimidine synthase from Syntrophus aciditrophicus (strain SB).